We begin with the raw amino-acid sequence, 321 residues long: Auxin-responsive protein IAA8 (321 aa).

Positions 54–58 match the EAR-like (transcriptional repression) motif; the sequence is LRLGL. Residues 199–301 form the PB1 domain; sequence VLFVKVSMDG…TCQKLKIMKG (103 aa).

Belongs to the Aux/IAA family. In terms of assembly, homodimers and heterodimers. Interacts with TPL. In terms of tissue distribution, highly expressed in the whole plant.

The protein localises to the nucleus. Aux/IAA proteins are short-lived transcriptional factors that function as repressors of early auxin response genes at low auxin concentrations. Repression is thought to result from the interaction with auxin response factors (ARFs), proteins that bind to the auxin-responsive promoter element (AuxRE). Formation of heterodimers with ARF proteins may alter their ability to modulate early auxin response genes expression. This chain is Auxin-responsive protein IAA8 (IAA8), found in Arabidopsis thaliana (Mouse-ear cress).